The sequence spans 168 residues: G/U mismatch-specific DNA glycosylase (168 aa).

Belongs to the uracil-DNA glycosylase (UDG) superfamily. TDG/mug family. In terms of assembly, binds DNA as a monomer.

The protein localises to the cytoplasm. The catalysed reaction is Specifically hydrolyzes mismatched double-stranded DNA and polynucleotides, releasing free uracil.. Its function is as follows. Excises ethenocytosine and uracil, which can arise by alkylation or deamination of cytosine, respectively, from the corresponding mispairs with guanine in ds-DNA. It is capable of hydrolyzing the carbon-nitrogen bond between the sugar-phosphate backbone of the DNA and the mispaired base. The complementary strand guanine functions in substrate recognition. Required for DNA damage lesion repair in stationary-phase cells. This is G/U mismatch-specific DNA glycosylase from Citrobacter koseri (strain ATCC BAA-895 / CDC 4225-83 / SGSC4696).